The sequence spans 636 residues: Eisosome protein sle1 (636 aa).

The segment at 1–297 (MSHASKNYNA…HVIIYENKEG (297 aa)) is required for targeting the protein to eisosomes. 6 disordered regions span residues 111 to 205 (ANYM…SPAN), 222 to 284 (YSPS…VPPV), 313 to 387 (DPSG…TQHF), 400 to 451 (QYYQ…QPSL), 467 to 550 (DITP…VNNA), and 572 to 604 (PSNH…RFAN). 5 stretches are compositionally biased toward polar residues: residues 131–159 (PSQQ…QSYQ), 166–178 (RTSQ…NNYS), 188–204 (RRSS…GSPA), 237–255 (SYNN…TQKS), and 315–354 (SGSN…VVSR). Residues 355–383 (SGQNNNQPAQPGQYNQQSQPVQSYQSGQS) are compositionally biased toward low complexity. Composition is skewed to polar residues over residues 400 to 412 (QYYQ…QPVQ) and 422 to 439 (PVQS…QPVQ). Low complexity predominate over residues 471-484 (TASSTTANNAYASA). Positions 503 to 512 (SFERERDSGR) are enriched in basic and acidic residues. Residues 572-589 (PSNHAYSEGRSYTFTGGQ) are compositionally biased toward polar residues.

In terms of assembly, component of eisosomes, large cytoplasmic protein assemblies that localize to specialized domains termed MCCs on the plasma membrane.

Its subcellular location is the cytoplasm. The protein resides in the cell cortex. It localises to the cell tip. Important for the biogenesis of filamentous eisosomes, large cytoplasmic protein assemblies that localize to specialized domains on the plasma membrane to cluster specific proteins at sites of membrane invaginations. This is Eisosome protein sle1 (sle1) from Schizosaccharomyces pombe (strain 972 / ATCC 24843) (Fission yeast).